The primary structure comprises 722 residues: Glycine--tRNA ligase beta subunit (722 aa).

It belongs to the class-II aminoacyl-tRNA synthetase family. As to quaternary structure, tetramer of two alpha and two beta subunits.

The protein localises to the cytoplasm. The enzyme catalyses tRNA(Gly) + glycine + ATP = glycyl-tRNA(Gly) + AMP + diphosphate. This chain is Glycine--tRNA ligase beta subunit, found in Xylella fastidiosa (strain M12).